An 82-amino-acid polypeptide reads, in one-letter code: Beta-insect depressant toxin LqqIT2 (82 aa).

Positions M1–A21 are cleaved as a signal peptide. Residues D22–G82 form the LCN-type CS-alpha/beta domain. Intrachain disulfides connect C31/C81, C35/C56, C42/C63, and C46/C65.

It belongs to the long (4 C-C) scorpion toxin superfamily. Sodium channel inhibitor family. Beta subfamily. As to expression, expressed by the venom gland.

It is found in the secreted. Its function is as follows. Depressant insect beta-toxins cause a transient contraction paralysis followed by a slow flaccid paralysis. They bind voltage-independently at site-4 of sodium channels and shift the voltage of activation toward more negative potentials thereby affecting sodium channel activation and promoting spontaneous and repetitive firing. Aside from typical beta-toxin effects, this toxin also affects the inactivation process and ion selectivity of the insect voltage-gated sodium channel. This toxin is active only on insects. Is active on the insect voltage-gated sodium channel para. In vivo, when injected intraperitoneally, it exhibits analgesic activity, increasing hot plate and tail flick withdrawal latencies in a dose-dependent fashion. This phenomenon might be partly due to an inhibitory mechanism activated by noxious stimuli. The chain is Beta-insect depressant toxin LqqIT2 from Leiurus quinquestriatus quinquestriatus (Egyptian scorpion).